Reading from the N-terminus, the 50-residue chain is Sperm protamine P1 (50 aa).

Disulfide bonds link C7-C15 and C39-C47.

This sequence belongs to the protamine P1 family. Cross-linked by interchain disulfide bonds around the DNA-helix. In terms of tissue distribution, testis.

The protein resides in the nucleus. It is found in the chromosome. Its function is as follows. Protamines substitute for histones in the chromatin of sperm during the haploid phase of spermatogenesis. They compact sperm DNA into a highly condensed, stable and inactive complex. This chain is Sperm protamine P1 (PRM1), found in Oryctolagus cuniculus (Rabbit).